A 292-amino-acid chain; its full sequence is Elongation factor Ts (292 aa).

Positions Thr-80–Val-83 are involved in Mg(2+) ion dislocation from EF-Tu.

The protein belongs to the EF-Ts family.

The protein localises to the cytoplasm. In terms of biological role, associates with the EF-Tu.GDP complex and induces the exchange of GDP to GTP. It remains bound to the aminoacyl-tRNA.EF-Tu.GTP complex up to the GTP hydrolysis stage on the ribosome. In Lactiplantibacillus plantarum (strain ATCC BAA-793 / NCIMB 8826 / WCFS1) (Lactobacillus plantarum), this protein is Elongation factor Ts.